The following is a 436-amino-acid chain: Gamma-glutamyl phosphate reductase (436 aa).

This sequence belongs to the gamma-glutamyl phosphate reductase family.

The protein resides in the cytoplasm. The enzyme catalyses L-glutamate 5-semialdehyde + phosphate + NADP(+) = L-glutamyl 5-phosphate + NADPH + H(+). The protein operates within amino-acid biosynthesis; L-proline biosynthesis; L-glutamate 5-semialdehyde from L-glutamate: step 2/2. In terms of biological role, catalyzes the NADPH-dependent reduction of L-glutamate 5-phosphate into L-glutamate 5-semialdehyde and phosphate. The product spontaneously undergoes cyclization to form 1-pyrroline-5-carboxylate. The polypeptide is Gamma-glutamyl phosphate reductase (Prochlorococcus marinus (strain MIT 9312)).